Here is a 145-residue protein sequence, read N- to C-terminus: D-aminoacyl-tRNA deacylase (145 aa).

The short motif at 137–138 is the Gly-cisPro motif, important for rejection of L-amino acids element; sequence GP.

This sequence belongs to the DTD family. In terms of assembly, homodimer.

Its subcellular location is the cytoplasm. It catalyses the reaction glycyl-tRNA(Ala) + H2O = tRNA(Ala) + glycine + H(+). The catalysed reaction is a D-aminoacyl-tRNA + H2O = a tRNA + a D-alpha-amino acid + H(+). An aminoacyl-tRNA editing enzyme that deacylates mischarged D-aminoacyl-tRNAs. Also deacylates mischarged glycyl-tRNA(Ala), protecting cells against glycine mischarging by AlaRS. Acts via tRNA-based rather than protein-based catalysis; rejects L-amino acids rather than detecting D-amino acids in the active site. By recycling D-aminoacyl-tRNA to D-amino acids and free tRNA molecules, this enzyme counteracts the toxicity associated with the formation of D-aminoacyl-tRNA entities in vivo and helps enforce protein L-homochirality. The polypeptide is D-aminoacyl-tRNA deacylase (Shewanella sp. (strain ANA-3)).